Reading from the N-terminus, the 696-residue chain is MARSHKLEDVRNIGIAAHIDAGKTTTTERILFYTGREHKIGEVHDGAATMDWMEQEQERGITITSAATTCEWAGKQINIIDTPGHVDFTIEVERSMRVLDGAVSVFCAVGGVQPQSETVWRQRNRYGVPSIVFVNKMDRTGANFYAVEEQIRTRLKGNPVPIQIPIGEEDNFLGVIDLVKMKAIVWDVDAAMGSNYHVEEIPANLLQKAQEYREKMIESISEVDGNEHLAEKYLEGEELSEDEIIAGIKAATIGMHIVPMTAGTSFKNKGVQTLLDAVVAYLPAPTECAPIKGTMMDDEDEEVIVPSTDSGEFASLAFKIMTDPFVGTLTFIRVYRGSLEAGSFVHNSTKDKKERIGRIVKMHAVKREDIKEIYAGEIGAVVGLKYTTTGDTLCSEADKVILERMTFPEPVISVAVEPKTKADQEKMGLALAKLAAEDPSFKVHTDEETGQTIISGMGELHLEILVDRMKREFKVEAEVGAPQVSYRETIRDTVNQEYKYAKQSGGRGAFGHVYLTIKPGDAGTGFVFHNEIKGGVIPKEYIPAVEKGCAETMSNGVLAGYPMEDIDITLYDGSYHEVDSNEMAFKLAASMGFKEGCRKARPAILEPLMKVEVEVPEDYMGDVIGDLNRRRGQVTNMGDRSGNKIVDAFVPLAEMFGYSTDLRSATQGRATYSMEFDHYEEVPKNVSEEIIKKRNG.

The tr-type G domain occupies 8-286 (EDVRNIGIAA…AVVAYLPAPT (279 aa)). Residues 17–24 (AHIDAGKT), 81–85 (DTPGH), and 135–138 (NKMD) each bind GTP.

The protein belongs to the TRAFAC class translation factor GTPase superfamily. Classic translation factor GTPase family. EF-G/EF-2 subfamily.

It localises to the cytoplasm. Functionally, catalyzes the GTP-dependent ribosomal translocation step during translation elongation. During this step, the ribosome changes from the pre-translocational (PRE) to the post-translocational (POST) state as the newly formed A-site-bound peptidyl-tRNA and P-site-bound deacylated tRNA move to the P and E sites, respectively. Catalyzes the coordinated movement of the two tRNA molecules, the mRNA and conformational changes in the ribosome. This is Elongation factor G from Sulfurimonas denitrificans (strain ATCC 33889 / DSM 1251) (Thiomicrospira denitrificans (strain ATCC 33889 / DSM 1251)).